Here is a 61-residue protein sequence, read N- to C-terminus: Small ribosomal subunit protein bS21 (61 aa).

The tract at residues 36-61 (EHYESPSVKRKKKAEAARKRKYKYGR) is disordered. Residues 43-61 (VKRKKKAEAARKRKYKYGR) show a composition bias toward basic residues.

This sequence belongs to the bacterial ribosomal protein bS21 family.

In Caldanaerobacter subterraneus subsp. tengcongensis (strain DSM 15242 / JCM 11007 / NBRC 100824 / MB4) (Thermoanaerobacter tengcongensis), this protein is Small ribosomal subunit protein bS21 (rpsU).